We begin with the raw amino-acid sequence, 335 residues long: Large ribosomal subunit protein uL10 (335 aa).

Residues 304–335 (GAAAPVEEAPVEEKKEEKKEEAAPAAGLGMLF) are disordered. The span at 314 to 325 (VEEKKEEKKEEA) shows a compositional bias: basic and acidic residues.

This sequence belongs to the universal ribosomal protein uL10 family. As to quaternary structure, part of the 50S ribosomal subunit. Forms part of the ribosomal stalk which helps the ribosome interact with GTP-bound translation factors. Forms a heptameric L10(L12)2(L12)2(L12)2 complex, where L10 forms an elongated spine to which the L12 dimers bind in a sequential fashion.

Its function is as follows. Forms part of the ribosomal stalk, playing a central role in the interaction of the ribosome with GTP-bound translation factors. In Methanococcus maripaludis (strain C6 / ATCC BAA-1332), this protein is Large ribosomal subunit protein uL10.